A 344-amino-acid polypeptide reads, in one-letter code: Late embryogenesis abundant protein 17 (344 aa).

2 disordered regions span residues 1–20 (MASRQDRREARAEADARRAA) and 116–258 (KDYT…QGQG). Positions 3 to 52 (SRQDRREARAEADARRAAEEIARARDERVMQAEVDARSAADEIARARADR) form a coiled coil. Basic and acidic residues-rich tracts occupy residues 116–163 (KDYT…KDAV), 172–230 (EATK…DATK), and 238–252 (DKARETAATHDDATD).

It belongs to the LEA type 4 family. In terms of tissue distribution, expressed in embryos.

The protein resides in the nucleus. Functionally, involved in abiotic stress responses. May function as chaperone and contribute to prevent the formation of damaging protein aggregates. The sequence is that of Late embryogenesis abundant protein 17 from Oryza sativa subsp. japonica (Rice).